We begin with the raw amino-acid sequence, 655 residues long: UvrABC system protein B (655 aa).

Positions 25–181 constitute a Helicase ATP-binding domain; sequence DGINKGEKEQ…IRKLVFMQYE (157 aa). 38 to 45 provides a ligand contact to ATP; sequence GVTGSGKT. The Beta-hairpin motif lies at 91–114; it reads YYDYYQPEAYVPRTDTFIDKESSV. Residues 428–590 form the Helicase C-terminal domain; it reads QVEDLLGEVK…IVPKTTKRAL (163 aa). The UVR domain maps to 615–650; it reads RLLISDLENDMKEAAAKLDFERAASLRDQIATLKGL.

This sequence belongs to the UvrB family. Forms a heterotetramer with UvrA during the search for lesions. Interacts with UvrC in an incision complex.

Its subcellular location is the cytoplasm. In terms of biological role, the UvrABC repair system catalyzes the recognition and processing of DNA lesions. A damage recognition complex composed of 2 UvrA and 2 UvrB subunits scans DNA for abnormalities. Upon binding of the UvrA(2)B(2) complex to a putative damaged site, the DNA wraps around one UvrB monomer. DNA wrap is dependent on ATP binding by UvrB and probably causes local melting of the DNA helix, facilitating insertion of UvrB beta-hairpin between the DNA strands. Then UvrB probes one DNA strand for the presence of a lesion. If a lesion is found the UvrA subunits dissociate and the UvrB-DNA preincision complex is formed. This complex is subsequently bound by UvrC and the second UvrB is released. If no lesion is found, the DNA wraps around the other UvrB subunit that will check the other stand for damage. The polypeptide is UvrABC system protein B (Methanobrevibacter smithii (strain ATCC 35061 / DSM 861 / OCM 144 / PS)).